The chain runs to 586 residues: Phosphatidylinositol-3-phosphatase SAC1-A (586 aa).

Residues 1-519 (MANAYERFNL…TPLHVKKDWK (519 aa)) are Cytoplasmic-facing. Residues 121 to 450 (INNVLNTDGF…ANACAKQYAG (330 aa)) enclose the SAC domain. The tract at residues 451-586 (TGALKTDFTR…PKLVQKEKMD (136 aa)) is essential for phosphatidylinositol-4-phosphate phosphatase activity. Residues 520–540 (FLLLPVIMVVAFSMCIICLLM) form a helical membrane-spanning segment. Residues 541-547 (AGDTWTE) are Lumenal-facing. Residues 548-568 (TLAYVLFWGMASALTAAVIVV) form a helical membrane-spanning segment. Residues 569–586 (NGREFVDAPKLVQKEKMD) lie on the Cytoplasmic side of the membrane.

The protein resides in the endoplasmic reticulum membrane. Its subcellular location is the golgi apparatus membrane. It catalyses the reaction a 1,2-diacyl-sn-glycero-3-phospho-(1D-myo-inositol-3-phosphate) + H2O = a 1,2-diacyl-sn-glycero-3-phospho-(1D-myo-inositol) + phosphate. It carries out the reaction a 1,2-diacyl-sn-glycero-3-phospho-(1D-myo-inositol 4-phosphate) + H2O = a 1,2-diacyl-sn-glycero-3-phospho-(1D-myo-inositol) + phosphate. Its function is as follows. Phosphoinositide phosphatase which catalyzes the hydrolysis of phosphatidylinositol 4-phosphate (PtdIns(4)P), phosphatidylinositol 3-phosphate (PtdIns(3)P) and has low activity towards phosphatidylinositol-3,5-bisphosphate (PtdIns(3,5)P2). In Danio rerio (Zebrafish), this protein is Phosphatidylinositol-3-phosphatase SAC1-A (sacm1la).